The sequence spans 402 residues: Calcium-responsive transactivator (402 aa).

The tract at residues 1-148 (MSVAFASARP…TLPTTSMSMS (148 aa)) is N-terminal auto-inhibitory domain; necessary for interaction with SMARCA4/BRG1. The short motif at 50–53 (YQQI) is the SH2-binding element. Disordered regions lie at residues 72 to 129 (QSLL…GPNH), 141 to 170 (PTTS…SVPL), 195 to 250 (MHQQ…SSQQ), 262 to 290 (QYGH…YQPA), and 305 to 402 (TQHY…NYQQ). The segment covering 92 to 106 (QSGSAQGLHSQGSLS) has biased composition (low complexity). The span at 117 to 129 (SLMQAQIGNGPNH) shows a compositional bias: polar residues. A methionine-rich intra-molecular domain region spans residues 149–237 (GSGHGSGPGY…GGGVMGQRPM (89 aa)). Over residues 196–224 (HQQAASSHYSAAQGGSQHYQGQSMAMMGQ) the composition is skewed to low complexity. The MFD domain stretch occupies residues 251–323 (YLGQEEYYGG…SQYSQQQTGY (73 aa)). Composition is skewed to low complexity over residues 311-379 (GGNS…RASQ) and 390-402 (YGYE…NYQQ). Positions 340 to 402 (NQQSYPGQQQ…EQGQYGNYQQ (63 aa)) are necessary for nuclear localization. An SH2-binding motif is present at residues 359–362 (SQYS). The short motif at 377–385 (ASQTGPSTQ) is the SH3-binding element. The interval 393-402 (EQGQYGNYQQ) is necessary for interaction with CREBBP and for the recruitment of CREBBP to the nuclear bodies. Positions 397 to 400 (YGNY) match the SH2-binding motif.

Belongs to the SS18 family. In terms of assembly, homodimer. Dimerization may be necessary for its function in neuronal dendritic development. Interacts (via C-terminus) with CREBBP (via N-terminus), EP300 and SMARCA4/BRG1. Interacts with the nBAF complex. Association with CREBBP facilitates transcription while the association with SMARCA4/BRG1 suppresses CREST-mediated transcription in resting neurons.

It localises to the nucleus. The protein resides in the chromosome. It is found in the centromere. The protein localises to the kinetochore. Its function is as follows. Transcriptional activator which is required for calcium-dependent dendritic growth and branching in cortical neurons. Recruits CREB-binding protein (CREBBP) to nuclear bodies. Component of the CREST-BRG1 complex, a multiprotein complex that regulates promoter activation by orchestrating a calcium-dependent release of a repressor complex and a recruitment of an activator complex. In resting neurons, transcription of the c-FOS promoter is inhibited by BRG1-dependent recruitment of a phospho-RB1-HDAC1 repressor complex. Upon calcium influx, RB1 is dephosphorylated by calcineurin, which leads to release of the repressor complex. At the same time, there is increased recruitment of CREBBP to the promoter by a CREST-dependent mechanism, which leads to transcriptional activation. The CREST-BRG1 complex also binds to the NR2B promoter, and activity-dependent induction of NR2B expression involves a release of HDAC1 and recruitment of CREBBP. This chain is Calcium-responsive transactivator (SS18L1), found in Bos taurus (Bovine).